A 188-amino-acid polypeptide reads, in one-letter code: Elongation factor P (188 aa).

This sequence belongs to the elongation factor P family.

Its subcellular location is the cytoplasm. It participates in protein biosynthesis; polypeptide chain elongation. In terms of biological role, involved in peptide bond synthesis. Stimulates efficient translation and peptide-bond synthesis on native or reconstituted 70S ribosomes in vitro. Probably functions indirectly by altering the affinity of the ribosome for aminoacyl-tRNA, thus increasing their reactivity as acceptors for peptidyl transferase. The protein is Elongation factor P of Anaplasma marginale (strain St. Maries).